The sequence spans 297 residues: HTH-type transcriptional regulator ArgP (297 aa).

The region spanning 4 to 60 (PDYRTLQALDAVIRERGFERAAQKLCITQSAVSQRIKQLENMFGQPLLVRTVPPRPT) is the HTH lysR-type domain. The segment at residues 21 to 40 (FERAAQKLCITQSAVSQRIK) is a DNA-binding region (H-T-H motif).

It belongs to the LysR transcriptional regulatory family. In terms of assembly, homodimer.

In terms of biological role, controls the transcription of genes involved in arginine and lysine metabolism. This Salmonella choleraesuis (strain SC-B67) protein is HTH-type transcriptional regulator ArgP.